Here is a 199-residue protein sequence, read N- to C-terminus: Transgelin-3 (199 aa).

The Calponin-homology (CH) domain occupies 24–136 (ADLENKLVDW…RTLMALGSVA (113 aa)). Ser-163 carries the phosphoserine modification. A Calponin-like repeat occupies 174–199 (IGLQMGSNKGASQAGMTGYGMPRQIM). Over residues 178–188 (MGSNKGASQAG) the composition is skewed to polar residues. Residues 178 to 199 (MGSNKGASQAGMTGYGMPRQIM) form a disordered region.

This sequence belongs to the calponin family. As to expression, abundant and ubiquitous expression in neurons.

This Rattus norvegicus (Rat) protein is Transgelin-3 (Tagln3).